Here is a 396-residue protein sequence, read N- to C-terminus: MTEHNVRNFNINFGPQHPAAHGVLRLVLELDGEIVERVDPHIGLLHRGTEKLIEAKTYLQAIPYFDRLDYVAPMNQEHAFALAVERLTGTQVPIRGQLIRVLYSEIGRILSHLLNVTTQAMDVGALTPPLWGFEEREKLMVFYERACGARMHAAYFRPGGVHQDLPHQLVEDIGNWIDPFLKTVDDIDELLTGNRIFKQRNVDIGVVSLEDAWAWGFSGVMVRGSGAAWDLRRSQPYECYSDLEFDIPIGKNGDCFDRYLIRMIEMRQSARIMRQCVDRLLGDAKIGPVSSLDGKIVPPKRGEMKRSMEALIHHFKLYTEGYHVPAGEVYAAVEAPKGEFGVYLVSDGTNKPYRCKIRAPGYAHLQAMDFLCRGHQLADVSAVLGSLDIVFGEVDR.

The protein belongs to the complex I 49 kDa subunit family. NDH-1 is composed of 14 different subunits. Subunits NuoB, C, D, E, F, and G constitute the peripheral sector of the complex.

The protein localises to the cell inner membrane. The enzyme catalyses a quinone + NADH + 5 H(+)(in) = a quinol + NAD(+) + 4 H(+)(out). Functionally, NDH-1 shuttles electrons from NADH, via FMN and iron-sulfur (Fe-S) centers, to quinones in the respiratory chain. The immediate electron acceptor for the enzyme in this species is believed to be ubiquinone. Couples the redox reaction to proton translocation (for every two electrons transferred, four hydrogen ions are translocated across the cytoplasmic membrane), and thus conserves the redox energy in a proton gradient. The polypeptide is NADH-quinone oxidoreductase subunit D 1 (Rhizobium meliloti (strain 1021) (Ensifer meliloti)).